The chain runs to 445 residues: 2-oxoisovalerate dehydrogenase subunit alpha, mitochondrial (445 aa).

The N-terminal 45 residues, 1-45, are a transit peptide targeting the mitochondrion; the sequence is MAVAIAAARVWRLNRGLSQAALLLLRQPGARGLARSHPPRQQQQF. Residues 33 to 52 are disordered; the sequence is LARSHPPRQQQQFSSLDDKP. Positions 158 and 159 each coordinate thiamine diphosphate. A K(+)-binding site is contributed by Ser206. Ser207 provides a ligand contact to thiamine diphosphate. K(+)-binding residues include Pro208, Thr211, and Gln212. Glu238 is a binding site for Mg(2+). Gly239, Ala240, and Arg265 together coordinate thiamine diphosphate. Mg(2+)-binding residues include Asn267 and Tyr269. Residue His336 participates in thiamine diphosphate binding. Phosphoserine; by BCKDK is present on Ser337. A Phosphothreonine modification is found at Thr338. Ser339 and Ser347 each carry phosphoserine. Residue Lys356 is modified to N6-acetyllysine; alternate. At Lys356 the chain carries N6-succinyllysine; alternate. Lys380 carries the post-translational modification N6-succinyllysine.

This sequence belongs to the BCKDHA family. In terms of assembly, heterotetramer of 2 alpha/BCKDHA and 2 beta chains/BCKDHB that forms the branched-chain alpha-keto acid decarboxylase (E1) component of the BCKD complex. The branched-chain alpha-ketoacid dehydrogenase is a large complex composed of three major building blocks E1, E2 and E3. It is organized around E2, a 24-meric cubic core composed of DBT, to which are associated 6 to 12 copies of E1, and approximately 6 copies of the dehydrogenase E3, a DLD dimer. Interacts with PPM1K. The cofactor is thiamine diphosphate. It depends on Mg(2+) as a cofactor. Phosphorylated at Ser-337 by BCKDK and dephosphorylated by protein phosphatase PPM1K.

The protein localises to the mitochondrion matrix. It carries out the reaction N(6)-[(R)-lipoyl]-L-lysyl-[protein] + 3-methyl-2-oxobutanoate + H(+) = N(6)-[(R)-S(8)-2-methylpropanoyldihydrolipoyl]-L-lysyl-[protein] + CO2. Its function is as follows. Together with BCKDHB forms the heterotetrameric E1 subunit of the mitochondrial branched-chain alpha-ketoacid dehydrogenase (BCKD) complex. The BCKD complex catalyzes the multi-step oxidative decarboxylation of alpha-ketoacids derived from the branched-chain amino-acids valine, leucine and isoleucine producing CO2 and acyl-CoA which is subsequently utilized to produce energy. The E1 subunit catalyzes the first step with the decarboxylation of the alpha-ketoacid forming an enzyme-product intermediate. A reductive acylation mediated by the lipoylamide cofactor of E2 extracts the acyl group from the E1 active site for the next step of the reaction. The chain is 2-oxoisovalerate dehydrogenase subunit alpha, mitochondrial from Homo sapiens (Human).